A 209-amino-acid chain; its full sequence is Streptogramin A acetyltransferase (209 aa).

H82 is an active-site residue.

Belongs to the transferase hexapeptide repeat family. In terms of assembly, homohexamer.

Inactivates the A compounds of streptogramin antibiotics by acetylation, thus providing resistance to these antibiotics. In Enterococcus faecium (Streptococcus faecium), this protein is Streptogramin A acetyltransferase (vatD).